We begin with the raw amino-acid sequence, 678 residues long: Protein distal antenna (678 aa).

Residues 7-58 (TKGKRPLRSLTPRDKIHAIQRIHDGESKASVARDIGVPESTLRGWCKNEDKL) enclose the HTH psq-type domain. The H-T-H motif DNA-binding region spans 34 to 54 (KASVARDIGVPESTLRGWCKN). Disordered regions lie at residues 232-310 (GAGN…GGPM), 344-381 (GVTS…PSGS), 445-528 (KETE…TSEC), 541-592 (GMEA…DEEE), and 645-678 (NETP…RRRK). Composition is skewed to polar residues over residues 241–254 (PSGQ…SPRS) and 349–363 (PIRS…QLAQ). A phosphoserine mark is found at Ser-251 and Ser-254. The span at 372–381 (LTPSSTPSGS) shows a compositional bias: low complexity. Positions 449 to 461 (TPSVRSLSSNEQN) are enriched in polar residues. Positions 462–478 (PEADEATETDLDGEVEP) are enriched in acidic residues. Over residues 495 to 508 (TPSQSPIAHSSGSR) the composition is skewed to polar residues. A compositionally biased stretch (low complexity) spans 570–586 (NNNDVSASNNNNNNNSN). A compositionally biased stretch (acidic residues) spans 657–667 (EDSEEHAAEEE).

As to quaternary structure, homomers. Interacts with itself, danr, ey and dac to form a complex (or complexes) containing the RD factors. In terms of tissue distribution, coexpressed with danr in the presumptive distal antenna, but not in the leg imaginal disk. Both proteins are also expressed in the brain and the eye region of the eye-antenna disk. First detected in early L3 eye disks in cells surrounding the newly initiated MF. Levels are uniform and high anterior to the furrow, lower levels within and posterior to the furrow. Limited expression is seen in small groups of cells in leg and wing. These appear in the location of prominent sense organ progenitors at relatively late stages of disk development.

The protein localises to the nucleus. Probable transcription factor with a role in the retinal determination (RD) network. Regulates ato expression and is required for normal R8 induction and differentiation. Danr appears to repress Dan expression, but Dan is required for Danr expression anterior to the morphogenetic furrow (MF). Dan and Danr lie downstream of so and require dac function for highest levels of expression. Contributes to differentiation of antenna-specific characteristics; effector gene that acts downstream of homothorax (hth), Distal-less (Dll), cut (ct) and spineless (ss) genes to control differentiation of distal antennal structures. In Drosophila melanogaster (Fruit fly), this protein is Protein distal antenna.